We begin with the raw amino-acid sequence, 284 residues long: Protein phosphatase 1 regulatory subunit 3B (284 aa).

The PP1-binding motif motif lies at 61 to 64 (RVSF). Positions 124–232 (RNRLQTNHVC…SNKGKNYRIT (109 aa)) constitute a CBM21 domain. At Ser260 the chain carries Phosphoserine.

As to quaternary structure, interacts with glycogen, PPP1CC catalytic subunit of PP1 and PYGL. Associates with glycogen particles. Forms complexes with debranching enzyme, glycogen phosphorylase, glycogen synthase and phosphorylase kinase which is necessary for its regulation of PP1 activity. As to expression, highly expressed in liver (at protein level). Expressed predominantly in liver. Expressed moderately in heart. Expressed weakly in prostate, stomach, thyroid, lung, kidney, spleen and skeletal muscle.

Functionally, acts as a glycogen-targeting subunit for phosphatase PP1. Facilitates interaction of the PP1 with enzymes of the glycogen metabolism and regulates its activity. Suppresses the rate at which PP1 dephosphorylates (inactivates) glycogen phosphorylase and enhances the rate at which it activates glycogen synthase and therefore limits glycogen breakdown. Its activity is inhibited by PYGL, resulting in inhibition of the glycogen synthase and glycogen phosphorylase phosphatase activities of PP1. Dramatically increases basal and insulin-stimulated glycogen synthesis upon overexpression in hepatocytes. This Mus musculus (Mouse) protein is Protein phosphatase 1 regulatory subunit 3B (Ppp1r3b).